The sequence spans 118 residues: Large ribosomal subunit protein bL20 (118 aa).

It belongs to the bacterial ribosomal protein bL20 family.

In terms of biological role, binds directly to 23S ribosomal RNA and is necessary for the in vitro assembly process of the 50S ribosomal subunit. It is not involved in the protein synthesizing functions of that subunit. In Pelagibacter ubique (strain HTCC1062), this protein is Large ribosomal subunit protein bL20.